The following is a 134-amino-acid chain: Protein YhfA (134 aa).

This Escherichia coli O157:H7 protein is Protein YhfA (yhfA).